Here is a 689-residue protein sequence, read N- to C-terminus: Outer spore wall assembly protein SHE10 (689 aa).

An N-terminal signal peptide occupies residues 1-18 (MKILTKFFLLLVVTTCSL). The interval 259-308 (TKAKSKSKPRVNASASARGNARAGAKAGAKAGTSEISASATADPTTSASA) is disordered. Residues 270 to 308 (NASASARGNARAGAKAGAKAGTSEISASATADPTTSASA) are compositionally biased toward low complexity. Positions 406 to 435 (NKTKTVSEVLQNRYKNLNRAIQDINCTCET) form a coiled coil. Over residues 610–626 (EQESKQREDSPRMDRDS) the composition is skewed to basic and acidic residues. The interval 610-689 (EQESKQREDS…TVQNNVTLQI (80 aa)) is disordered. Polar residues-rich tracts occupy residues 627–637 (TQNVENSNTTT), 655–670 (QNGT…GPDS), and 677–689 (METT…TLQI).

It belongs to the SHE10 family. Component of the mitochondria-localized RNase mitochondrial RNA-processing (RNase MRP) composed of one single RNA encoded by the NME1 gene and at least 31 proteins. Absent in the nucleus-localized RNase MRP (NuMRP).

Its subcellular location is the mitochondrion. Involved in spore wall assembly. May be a component of the mitochondrial RNase MRP (MtMRP), a ribonucleoprotein endoribonuclease involved in the cleaving RNA transcripts to generate primers for DNA replication in mitochondria. The chain is Outer spore wall assembly protein SHE10 from Zygosaccharomyces rouxii (strain ATCC 2623 / CBS 732 / NBRC 1130 / NCYC 568 / NRRL Y-229).